Here is a 398-residue protein sequence, read N- to C-terminus: Stimulator of interferon genes protein (398 aa).

Over methionine 1 to arginine 16 the chain is Cytoplasmic. A helical membrane pass occupies residues leucine 17 to aspartate 37. The Lumenal segment spans residues serine 38–arginine 44. Residues alanine 45–alanine 65 form a helical membrane-spanning segment. Over glutamate 66 to serine 91 the chain is Cytoplasmic. The helical transmembrane segment at glycine 92–valine 112 threads the bilayer. At lysine 113–leucine 120 the chain is on the lumenal side. Residues methionine 121–isoleucine 141 form a helical membrane-spanning segment. Residues serine 142–asparagine 398 are Cytoplasmic-facing. Residues methionine 150–isoleucine 331 are cyclic dinucleotide-binding domain (CBD). The 2',3'-cGAMP site is built by serine 159, tyrosine 164, arginine 230, and threonine 254. Residues serine 159, tyrosine 164, arginine 230–threonine 233, and threonine 254 contribute to the 3',3'-c-di-GMP site. Residues proline 375 to asparagine 398 are disordered. Over residues aspartate 387–asparagine 398 the composition is skewed to polar residues.

It belongs to the STING family. As to quaternary structure, homodimer; forms a homodimer in absence of cyclic nucleotide (c-di-GMP or cGAMP). Homotetramer; in presence of cyclic nucleotide (c-di-GMP or cGAMP), forms tetramers and higher-order oligomers through side-by-side packing. Interacts (when phosphorylated) with irf3; following activation and phosphorylation by tbk1, recruits irf3. In terms of processing, phosphorylation by TBK1 leads to activation and production of IFN-beta. Following cyclic nucleotide (c-di-GMP or cGAMP)-binding, activation and translocation from the endoplasmic reticulum, STING1 is phosphorylated by tbk1, leading to recruitment of the transcription factor irf3 to induce type-I interferons and other cytokines.

The protein resides in the endoplasmic reticulum membrane. It is found in the cytoplasm. Its subcellular location is the perinuclear region. It localises to the endoplasmic reticulum-Golgi intermediate compartment membrane. The protein localises to the golgi apparatus membrane. The protein resides in the cytoplasmic vesicle. It is found in the autophagosome membrane. It carries out the reaction H(+)(in) = H(+)(out). Functionally, facilitator of innate immune signaling that acts as a sensor of cytosolic DNA from bacteria and viruses and promotes the production of type I interferon (IFN-alpha and IFN-beta). Innate immune response is triggered in response to non-CpG double-stranded DNA from viruses and bacteria delivered to the cytoplasm. Acts by binding cyclic dinucleotides: recognizes and binds cyclic di-GMP (c-di-GMP), a second messenger produced by bacteria, and cyclic GMP-AMP (cGAMP), a messenger produced by CGAS in response to DNA virus in the cytosol. Upon binding of c-di-GMP or cGAMP, STING1 oligomerizes and is able to activate both NF-kappa-B and irf3 transcription pathways to induce expression of type I interferon and exert a potent anti-viral state. Exhibits 2',3' phosphodiester linkage-specific ligand recognition: can bind both 2'-3' linked cGAMP and 3'-3' linked cGAMP but is preferentially activated by 2'-3' linked cGAMP. In addition to promote the production of type I interferons, plays a direct role in autophagy. Following cGAMP-binding, STING1 buds from the endoplasmic reticulum into COPII vesicles, which then form the endoplasmic reticulum-Golgi intermediate compartment (ERGIC). The ERGIC serves as the membrane source for LC3 lipidation, leading to formation of autophagosomes that target cytosolic DNA or DNA viruses for degradation by the lysosome. Promotes autophagy by acting as a proton channel that directs proton efflux from the Golgi to facilitate LC3 lipidation. The autophagy- and interferon-inducing activities can be uncoupled and autophagy induction is independent of TBK1 phosphorylation. This chain is Stimulator of interferon genes protein, found in Danio rerio (Zebrafish).